The primary structure comprises 358 residues: Trans-anol O-methyltransferase 1 (358 aa).

S-adenosyl-L-methionine contacts are provided by Gly201, Asp224, Asp244, Met245, and Arg259. The Proton acceptor role is filled by His262.

The protein belongs to the class I-like SAM-binding methyltransferase superfamily. Cation-independent O-methyltransferase family. COMT subfamily. In terms of tissue distribution, highly expressed in developing fruits. Expressed at low levels in roots, young leaves, buds and flowers.

It carries out the reaction (E)-anol + S-adenosyl-L-methionine = (E)-anethole + S-adenosyl-L-homocysteine + H(+). The catalysed reaction is (E)-isoeugenol + S-adenosyl-L-methionine = (E)-isomethyleugenol + S-adenosyl-L-homocysteine + H(+). The protein operates within aromatic compound metabolism; phenylpropanoid biosynthesis. Its activity is regulated as follows. Inhibited by zinc and copper. Its function is as follows. Phenylpropene O-methyltransferase that catalyzes the conversion of trans-anol to trans-anethole and isoeugenol to isomethyleugenol. Phenylpropenes are the primary constituents of various essential plant oils. They are produced as antimicrobial and antianimal compounds, or as floral attractants of pollinators. The sequence is that of Trans-anol O-methyltransferase 1 (AIMT1) from Pimpinella anisum (Anise).